The primary structure comprises 714 residues: Phenylalanine 2-monooxygenase precursor (714 aa).

A propeptide spans 1–15 (MGVTVIPRLLGLKDE) (removed in mature form; occupies the channel of the substrate amino acid from the outside of the protein to the interior flavin ring in the precursor). FAD-binding positions include Gly2, Gly68, and 95–96 (EA). The propeptide at 108 to 109 (IK) is linker peptide. FAD contacts are provided by residues Arg120, 141 to 144 (GAMR), and Val375. Arg144 lines the substrate pocket. Residue Tyr537 coordinates substrate. Residues 652–653 (SD) and 660–662 (GWL) each bind FAD. Gly660 contributes to the substrate binding site.

This sequence belongs to the phenylalanine 2-monooxygenase family. Heterotetramer composed of 2 alpha and 2 beta subunits. It depends on FAD as a cofactor. Proteolytically cleaved to yield the active enzyme. Cleavage of the linkage between the 2 subunits causes reshaping of the oxygen channel and the hydrophobic environment around the flavin ring. Removal of the prosequence causes opening of the amino acid channel.

It catalyses the reaction L-phenylalanine + O2 = 2-phenylacetamide + CO2 + H2O. Its function is as follows. Catalyzes both oxygenative decarboxylation and oxidative deamination, depending on the substrate used. Has high activity for L-Phe and L-Tyr, but relatively low activities for L-Met and L-Trp. L-Phe is mainly oxygenated and L-Met is mainly oxidized. The polypeptide is Phenylalanine 2-monooxygenase precursor (Pseudomonas sp).